The sequence spans 412 residues: Indian hedgehog B protein (412 aa).

The N-terminal stretch at 1–23 (MRLSTAAALLTGFILAFSPAYDG) is a signal peptide. Cysteine 24 carries N-palmitoyl cysteine lipidation. 7 residues coordinate Ca(2+): glutamate 89, glutamate 90, aspartate 95, threonine 125, glutamate 126, aspartate 129, and aspartate 131. Residues histidine 140, aspartate 147, and histidine 182 each coordinate Zn(2+). Residue glycine 197 is the site of Cholesterol glycine ester attachment.

This sequence belongs to the hedgehog family. As to quaternary structure, multimer. Interacts with BOC and CDON. Interacts with PTCH1. Interacts with glypican GPC3. In terms of processing, cholesterylation is required for N-product targeting to lipid rafts and multimerization. Post-translationally, the C-terminal domain displays an autoproteolysis activity and a cholesterol transferase activity. Both activities result in the cleavage of the full-length protein and covalent attachment of a cholesterol moiety to the C-terminal of the newly generated N-product. The N-product is the active species in both local and long-range signaling, whereas the C-product is degraded in the endoplasmic reticulum. N-palmitoylation by HHAT of N-product is required for indian hedgehog protein N-product multimerization and full activity. In terms of tissue distribution, expressed exclusively in the notochord.

It localises to the cell membrane. It is found in the endoplasmic reticulum membrane. Its subcellular location is the golgi apparatus membrane. The protein resides in the secreted. The catalysed reaction is glycyl-L-cysteinyl-[protein] + cholesterol + H(+) = [protein]-C-terminal glycyl cholesterol ester + N-terminal L-cysteinyl-[protein]. Its function is as follows. Signal involved in the early induction and patterning of anterodorsal ectoderm, nervous system and somites. It is involved in the regulation of endochondral skeleton formation, and the development of retinal pigment epithelium (RPE), photoreceptors and periocular tissues. Functionally, the C-terminal part of the indian hedgehog protein precursor displays an autoproteolysis and a cholesterol transferase activity. Both activities result in the cleavage of the full-length protein into two parts followed by the covalent attachment of a cholesterol moiety to the C-terminal of the newly generated N-product. Both activities occur in the endoplasmic reticulum. The dually lipidated indian hedgehog protein N-product is a morphogen which is essential for a variety of patterning events during development. Binds to the patched (PTCH1) receptor, which functions in association with smoothened (SMO), to activate the transcription of target genes. In the notochord, induces somite patterning and muscle pioneer differentiation. This Danio rerio (Zebrafish) protein is Indian hedgehog B protein (ihhb).